The primary structure comprises 631 residues: Hepatocyte nuclear factor 1-alpha (631 aa).

Positions Met-1–Gly-31 are dimerization. An HNF-p1 domain is found at Met-1–Glu-32. The segment at Gly-40–Phe-81 is disordered. Ser-70 is modified (phosphoserine). Phosphothreonine is present on Thr-74. The POU-specific atypical domain occupies Lys-87–Gln-182. The residue at position 93 (Ser-93) is a Phosphoserine. Residue Lys-117 forms a Glycyl lysine isopeptide (Lys-Gly) (interchain with G-Cter in ubiquitin) linkage. 4 interaction with DNA regions span residues Gln-130–Glu-132, His-143–Asn-149, Lys-155–Lys-158, and Arg-203–Trp-206. A disordered region spans residues Gly-183 to Lys-205. Residues Lys-197–Lys-205 carry the Nuclear localization signal motif. The segment at residues Gly-199–His-279 is a DNA-binding region (homeobox; HNF1-type). Position 247 is a phosphoserine (Ser-247). 2 interaction with DNA regions span residues Arg-263 to Tyr-265 and Asn-270 to Lys-273. Disordered stretches follow at residues Met-283–Pro-358 and Ser-545–Val-567. Over residues Gly-288 to Ala-298 the composition is skewed to pro residues. Phosphoserine is present on Ser-313. Residues Pro-325–Pro-353 are compositionally biased toward polar residues.

Belongs to the HNF1 homeobox family. In terms of assembly, binds DNA as a dimer. Heterotetramer with PCBD1; formed by a dimer of dimers. Interacts with PCBD1. Interacts with BHLHE41. Interacts with NR5A2. Interacts with SPOP; this interaction promotes ubiquitination and degradation of HNF1A. Post-translationally, ubiquitinated in s SPOP-dependent manner; leading to prteasomal degradation. In terms of tissue distribution, liver.

It is found in the nucleus. In terms of biological role, transcriptional activator that regulates the tissue specific expression of multiple genes, especially in pancreatic islet cells and in liver. Binds to the inverted palindrome 5'-GTTAATNATTAAC-3'. Activates the transcription of CYP1A2, CYP2E1 and CYP3A11. Its function is as follows. (Microbial infection) Plays a crucial role for hepatitis B virus gene transcription and DNA replication. Mechanistically, synergistically cooperates with NR5A2 to up-regulate the activity of one of the critical cis-elements in the hepatitis B virus genome enhancer II (ENII). The protein is Hepatocyte nuclear factor 1-alpha (HNF1A) of Homo sapiens (Human).